The chain runs to 199 residues: Cytochrome c oxidase subunit 2 (199 aa).

The chain crosses the membrane as a helical span at residues 1 to 13 (AICSLVLYLLTLM). Over 14–26 (LMEKLSSNTVDAQ) the chain is Mitochondrial matrix. Residues 27 to 54 (EVELIWTILPAIVLILLALPSLQILYMM) traverse the membrane as a helical segment. The Mitochondrial intermembrane portion of the chain corresponds to 55-199 (DEIDEPDLTL…SSLLSISSSL (145 aa)). Cu cation contacts are provided by H128, C163, E165, C167, H171, and M174. A Mg(2+)-binding site is contributed by E165.

The protein belongs to the cytochrome c oxidase subunit 2 family. In terms of assembly, component of the cytochrome c oxidase (complex IV, CIV), a multisubunit enzyme composed of 14 subunits. The complex is composed of a catalytic core of 3 subunits MT-CO1, MT-CO2 and MT-CO3, encoded in the mitochondrial DNA, and 11 supernumerary subunits COX4I, COX5A, COX5B, COX6A, COX6B, COX6C, COX7A, COX7B, COX7C, COX8 and NDUFA4, which are encoded in the nuclear genome. The complex exists as a monomer or a dimer and forms supercomplexes (SCs) in the inner mitochondrial membrane with NADH-ubiquinone oxidoreductase (complex I, CI) and ubiquinol-cytochrome c oxidoreductase (cytochrome b-c1 complex, complex III, CIII), resulting in different assemblies (supercomplex SCI(1)III(2)IV(1) and megacomplex MCI(2)III(2)IV(2)). Found in a complex with TMEM177, COA6, COX18, COX20, SCO1 and SCO2. Interacts with TMEM177 in a COX20-dependent manner. Interacts with COX20. Interacts with COX16. It depends on Cu cation as a cofactor.

It is found in the mitochondrion inner membrane. The enzyme catalyses 4 Fe(II)-[cytochrome c] + O2 + 8 H(+)(in) = 4 Fe(III)-[cytochrome c] + 2 H2O + 4 H(+)(out). Component of the cytochrome c oxidase, the last enzyme in the mitochondrial electron transport chain which drives oxidative phosphorylation. The respiratory chain contains 3 multisubunit complexes succinate dehydrogenase (complex II, CII), ubiquinol-cytochrome c oxidoreductase (cytochrome b-c1 complex, complex III, CIII) and cytochrome c oxidase (complex IV, CIV), that cooperate to transfer electrons derived from NADH and succinate to molecular oxygen, creating an electrochemical gradient over the inner membrane that drives transmembrane transport and the ATP synthase. Cytochrome c oxidase is the component of the respiratory chain that catalyzes the reduction of oxygen to water. Electrons originating from reduced cytochrome c in the intermembrane space (IMS) are transferred via the dinuclear copper A center (CU(A)) of subunit 2 and heme A of subunit 1 to the active site in subunit 1, a binuclear center (BNC) formed by heme A3 and copper B (CU(B)). The BNC reduces molecular oxygen to 2 water molecules using 4 electrons from cytochrome c in the IMS and 4 protons from the mitochondrial matrix. This Casuarius bennetti (Dwarf cassowary) protein is Cytochrome c oxidase subunit 2 (MT-CO2).